The chain runs to 139 residues: Transcription antitermination protein NusB (139 aa).

It belongs to the NusB family.

Its function is as follows. Involved in transcription antitermination. Required for transcription of ribosomal RNA (rRNA) genes. Binds specifically to the boxA antiterminator sequence of the ribosomal RNA (rrn) operons. The polypeptide is Transcription antitermination protein NusB (Lactiplantibacillus plantarum (strain ATCC BAA-793 / NCIMB 8826 / WCFS1) (Lactobacillus plantarum)).